Here is a 381-residue protein sequence, read N- to C-terminus: 1-deoxy-D-xylulose 5-phosphate reductoisomerase (381 aa).

NADPH-binding residues include threonine 10, glycine 11, serine 12, isoleucine 13, glycine 36, lysine 37, asparagine 38, and asparagine 120. Lysine 121 contacts 1-deoxy-D-xylulose 5-phosphate. Glutamate 122 is a binding site for NADPH. Aspartate 146 is a Mn(2+) binding site. The 1-deoxy-D-xylulose 5-phosphate site is built by serine 147, glutamate 148, serine 172, and histidine 195. Glutamate 148 provides a ligand contact to Mn(2+). NADPH is bound at residue glycine 201. 1-deoxy-D-xylulose 5-phosphate-binding residues include serine 208, asparagine 213, lysine 214, and glutamate 217. Glutamate 217 contributes to the Mn(2+) binding site.

This sequence belongs to the DXR family. Mg(2+) is required as a cofactor. Requires Mn(2+) as cofactor.

The catalysed reaction is 2-C-methyl-D-erythritol 4-phosphate + NADP(+) = 1-deoxy-D-xylulose 5-phosphate + NADPH + H(+). Its pathway is isoprenoid biosynthesis; isopentenyl diphosphate biosynthesis via DXP pathway; isopentenyl diphosphate from 1-deoxy-D-xylulose 5-phosphate: step 1/6. Catalyzes the NADPH-dependent rearrangement and reduction of 1-deoxy-D-xylulose-5-phosphate (DXP) to 2-C-methyl-D-erythritol 4-phosphate (MEP). This is 1-deoxy-D-xylulose 5-phosphate reductoisomerase from Lysinibacillus sphaericus (strain C3-41).